A 439-amino-acid chain; its full sequence is Innexin-19 (439 aa).

Transmembrane regions (helical) follow at residues 33–53 (PLILAVCCLVISAKQYGGTPI), 103–123 (QWVPFILIAEALMFSLPCIFW), 199–219 (IVYSFTKLLYSVNVVAQFFIL), and 285–305 (VFAFLWCWYMILAIITTCSFI).

This sequence belongs to the pannexin family.

It is found in the cell membrane. The protein resides in the cell junction. It localises to the gap junction. Functionally, structural component of the gap junctions that specifically coordinates left-right asymmetry in the developing nervous system. Acts by forming gap junction network linking embryonic neurons and providing electrical coupling between cells, leading to promote or inhibit AWC signaling. In Caenorhabditis briggsae, this protein is Innexin-19 (inx-19).